A 158-amino-acid polypeptide reads, in one-letter code: MALLTTGKPFIRDLEQYGALGVYAPLEGGYEGRYQRRLRATGYNVLHITARGLGDLSAYLTGIHGVRPPHLGKKNIGREAAVGPVYFIPPIATYQLENLPPKSKGLVIWIIESFVLSSEEKQYLINLSQQEPRLKFVLELGGERYFRWQPLSKSLIAA.

The protein belongs to the complex I NdhN subunit family. As to quaternary structure, NDH-1 can be composed of about 15 different subunits; different subcomplexes with different compositions have been identified which probably have different functions.

It localises to the cellular thylakoid membrane. The enzyme catalyses a plastoquinone + NADH + (n+1) H(+)(in) = a plastoquinol + NAD(+) + n H(+)(out). It catalyses the reaction a plastoquinone + NADPH + (n+1) H(+)(in) = a plastoquinol + NADP(+) + n H(+)(out). Its function is as follows. NDH-1 shuttles electrons from an unknown electron donor, via FMN and iron-sulfur (Fe-S) centers, to quinones in the respiratory and/or the photosynthetic chain. The immediate electron acceptor for the enzyme in this species is believed to be plastoquinone. Couples the redox reaction to proton translocation, and thus conserves the redox energy in a proton gradient. Cyanobacterial NDH-1 also plays a role in inorganic carbon-concentration. The protein is NAD(P)H-quinone oxidoreductase subunit N of Microcystis aeruginosa (strain NIES-843 / IAM M-2473).